Here is a 294-residue protein sequence, read N- to C-terminus: Small ribosomal subunit protein uS2 (294 aa).

Residues 261–274 (MDEDADSKKSKAEE) are compositionally biased toward basic and acidic residues. The disordered stretch occupies residues 261–294 (MDEDADSKKSKAEEPVIPTAEEPAITTIEVDQNE).

It belongs to the universal ribosomal protein uS2 family.

This is Small ribosomal subunit protein uS2 from Leptospira borgpetersenii serovar Hardjo-bovis (strain JB197).